The following is a 762-amino-acid chain: Anhydrosialidase (762 aa).

Positions 1 to 27 (MGRIGKKAMAIALVSAVMVTPLNVCAT) are cleaved as a signal peptide. Arg293 is a substrate binding site. Catalysis depends on Asp318, which acts as the Proton acceptor. BNR repeat units lie at residues 328 to 339 (AKSTDGGNTWSE), 511 to 522 (RYSDDEGASWSD), and 571 to 582 (MYSDDHGDNWTY). Residue Glu595 is part of the active site. Substrate is bound at residue Arg611. A BNR 4 repeat occupies 620-631 (VTSIDGGETWSD). Arg673 provides a ligand contact to substrate. The active-site Nucleophile is Tyr713.

This sequence belongs to the glycosyl hydrolase 33 family.

The protein localises to the secreted. It is found in the extracellular space. The enzyme catalyses Elimination of alpha-sialyl groups in N-acetylneuraminic acid glycosides, releasing 2,7-anhydro-alpha-N-acetylneuraminate.. In Macrobdella decora (North American leech), this protein is Anhydrosialidase.